Reading from the N-terminus, the 362-residue chain is Glutaminase-asparaginase (362 aa).

Residues 1-25 (MNAALKTFAPSALALLLILPSSASA) form the signal peptide. The Asparaginase/glutaminase domain occupies 35-362 (ANVVILATGG…KELQRIFWEY (328 aa)). The Acyl-ester intermediate role is filled by T45. Substrate is bound by residues S92 and 125 to 126 (TD).

It belongs to the asparaginase 1 family. As to quaternary structure, homotetramer.

The protein localises to the periplasm. The catalysed reaction is L-glutamine + H2O = L-glutamate + NH4(+). It carries out the reaction L-asparagine + H2O = L-aspartate + NH4(+). In Pseudomonas putida (strain ATCC 47054 / DSM 6125 / CFBP 8728 / NCIMB 11950 / KT2440), this protein is Glutaminase-asparaginase (ansB).